A 299-amino-acid polypeptide reads, in one-letter code: MWFKQISFYPLNKEKLPEADVLADKLAEAEFTHCQGLDWFSEGFTAPVSFSPELVFPADFTLRVALKKEEKVLPAGVIRDILEEKVAEIQNNEARNVGRKEKQELKEQITDDLLPRAFTRSSRTEAVFNTRHGYLLVNNAASAKAENILTKLREALGGLEASLPNTKQSPSSLMTGWLLQGHCEGGFELDSDCELKGTGDIVPVVKVSKQDLTADEVVQHVKNGKTVTQLGLVWREQIAFILTQDFTLKRIQYLDVLQEEAESNGDDAAGLAFASQILMAESVSTMLEELVSYLGGWQD.

Belongs to the RdgC family.

The protein localises to the cytoplasm. It localises to the nucleoid. In terms of biological role, may be involved in recombination. The sequence is that of Recombination-associated protein RdgC from Neisseria meningitidis serogroup B (strain ATCC BAA-335 / MC58).